A 329-amino-acid polypeptide reads, in one-letter code: Malate dehydrogenase (329 aa).

Position 12 to 18 (12 to 18) interacts with NAD(+); the sequence is GAAGQIG. Substrate-binding residues include R93 and R99. Residues N106, Q113, and 130 to 132 each bind NAD(+); that span reads VGN. The substrate site is built by N132 and R163. H188 functions as the Proton acceptor in the catalytic mechanism.

This sequence belongs to the LDH/MDH superfamily. MDH type 2 family.

It catalyses the reaction (S)-malate + NAD(+) = oxaloacetate + NADH + H(+). Functionally, catalyzes the reversible oxidation of malate to oxaloacetate. The sequence is that of Malate dehydrogenase from Frankia casuarinae (strain DSM 45818 / CECT 9043 / HFP020203 / CcI3).